We begin with the raw amino-acid sequence, 53 residues long: Metallothionein (53 aa).

It belongs to the metallothionein superfamily. Type 14 family.

This protein complexes cadmium, zinc and copper. The protein is Metallothionein of Synechococcus sp.